A 462-amino-acid polypeptide reads, in one-letter code: tRNA-2-methylthio-N(6)-dimethylallyladenosine synthase (462 aa).

An MTTase N-terminal domain is found at 1-116 (MKLFIQTLGC…ITQVLERPKA (116 aa)). [4Fe-4S] cluster contacts are provided by Cys10, Cys47, Cys79, Cys148, Cys152, and Cys155. Residues 134 to 370 (QGMGIKAHLN…NLHKEILSKK (237 aa)) enclose the Radical SAM core domain. In terms of domain architecture, TRAM spans 372–436 (QLEIGRIHNV…GGGLMGRFIN (65 aa)).

It belongs to the methylthiotransferase family. MiaB subfamily. As to quaternary structure, monomer. Requires [4Fe-4S] cluster as cofactor.

The protein resides in the cytoplasm. The catalysed reaction is N(6)-dimethylallyladenosine(37) in tRNA + (sulfur carrier)-SH + AH2 + 2 S-adenosyl-L-methionine = 2-methylsulfanyl-N(6)-dimethylallyladenosine(37) in tRNA + (sulfur carrier)-H + 5'-deoxyadenosine + L-methionine + A + S-adenosyl-L-homocysteine + 2 H(+). In terms of biological role, catalyzes the methylthiolation of N6-(dimethylallyl)adenosine (i(6)A), leading to the formation of 2-methylthio-N6-(dimethylallyl)adenosine (ms(2)i(6)A) at position 37 in tRNAs that read codons beginning with uridine. The protein is tRNA-2-methylthio-N(6)-dimethylallyladenosine synthase of Helicobacter hepaticus (strain ATCC 51449 / 3B1).